A 227-amino-acid polypeptide reads, in one-letter code: Cytochrome c oxidase subunit 2 (227 aa).

Residues 1–14 (MAYPVQLGFQDAAS) are Mitochondrial intermembrane-facing. A helical membrane pass occupies residues 15 to 45 (PIMEELLYFHDHTLMIVFLISSLVLYIISLM). The Mitochondrial matrix segment spans residues 46–59 (LTTKLMHTSTMDAQ). The chain crosses the membrane as a helical span at residues 60-87 (EVETVWTILPAIILILIALPSLRILYMM). At 88 to 227 (DEITTPSLTL…HFEEWLLSMF (140 aa)) the chain is on the mitochondrial intermembrane side. Cu cation is bound by residues H161, C196, E198, C200, H204, and M207. Residue E198 participates in Mg(2+) binding.

This sequence belongs to the cytochrome c oxidase subunit 2 family. In terms of assembly, component of the cytochrome c oxidase (complex IV, CIV), a multisubunit enzyme composed of 14 subunits. The complex is composed of a catalytic core of 3 subunits MT-CO1, MT-CO2 and MT-CO3, encoded in the mitochondrial DNA, and 11 supernumerary subunits COX4I, COX5A, COX5B, COX6A, COX6B, COX6C, COX7A, COX7B, COX7C, COX8 and NDUFA4, which are encoded in the nuclear genome. The complex exists as a monomer or a dimer and forms supercomplexes (SCs) in the inner mitochondrial membrane with NADH-ubiquinone oxidoreductase (complex I, CI) and ubiquinol-cytochrome c oxidoreductase (cytochrome b-c1 complex, complex III, CIII), resulting in different assemblies (supercomplex SCI(1)III(2)IV(1) and megacomplex MCI(2)III(2)IV(2)). Found in a complex with TMEM177, COA6, COX18, COX20, SCO1 and SCO2. Interacts with TMEM177 in a COX20-dependent manner. Interacts with COX20. Interacts with COX16. Cu cation is required as a cofactor.

The protein resides in the mitochondrion inner membrane. It carries out the reaction 4 Fe(II)-[cytochrome c] + O2 + 8 H(+)(in) = 4 Fe(III)-[cytochrome c] + 2 H2O + 4 H(+)(out). In terms of biological role, component of the cytochrome c oxidase, the last enzyme in the mitochondrial electron transport chain which drives oxidative phosphorylation. The respiratory chain contains 3 multisubunit complexes succinate dehydrogenase (complex II, CII), ubiquinol-cytochrome c oxidoreductase (cytochrome b-c1 complex, complex III, CIII) and cytochrome c oxidase (complex IV, CIV), that cooperate to transfer electrons derived from NADH and succinate to molecular oxygen, creating an electrochemical gradient over the inner membrane that drives transmembrane transport and the ATP synthase. Cytochrome c oxidase is the component of the respiratory chain that catalyzes the reduction of oxygen to water. Electrons originating from reduced cytochrome c in the intermembrane space (IMS) are transferred via the dinuclear copper A center (CU(A)) of subunit 2 and heme A of subunit 1 to the active site in subunit 1, a binuclear center (BNC) formed by heme A3 and copper B (CU(B)). The BNC reduces molecular oxygen to 2 water molecules using 4 electrons from cytochrome c in the IMS and 4 protons from the mitochondrial matrix. This chain is Cytochrome c oxidase subunit 2 (MT-CO2), found in Propithecus tattersalli (Golden-crowned Sifaka).